A 175-amino-acid polypeptide reads, in one-letter code: Large ribosomal subunit protein uL10 (175 aa).

Belongs to the universal ribosomal protein uL10 family. As to quaternary structure, part of the ribosomal stalk of the 50S ribosomal subunit. The N-terminus interacts with L11 and the large rRNA to form the base of the stalk. The C-terminus forms an elongated spine to which L12 dimers bind in a sequential fashion forming a multimeric L10(L12)X complex.

In terms of biological role, forms part of the ribosomal stalk, playing a central role in the interaction of the ribosome with GTP-bound translation factors. The sequence is that of Large ribosomal subunit protein uL10 from Thermobifida fusca (strain YX).